Consider the following 78-residue polypeptide: NAD(P)H-quinone oxidoreductase subunit O (78 aa).

It belongs to the complex I NdhO subunit family. As to quaternary structure, NDH-1 can be composed of about 15 different subunits; different subcomplexes with different compositions have been identified which probably have different functions.

The protein resides in the cell inner membrane. It carries out the reaction a plastoquinone + NADH + (n+1) H(+)(in) = a plastoquinol + NAD(+) + n H(+)(out). It catalyses the reaction a plastoquinone + NADPH + (n+1) H(+)(in) = a plastoquinol + NADP(+) + n H(+)(out). NDH-1 shuttles electrons from an unknown electron donor, via FMN and iron-sulfur (Fe-S) centers, to quinones in the respiratory and/or the photosynthetic chain. The immediate electron acceptor for the enzyme in this species is believed to be plastoquinone. Couples the redox reaction to proton translocation, and thus conserves the redox energy in a proton gradient. Cyanobacterial NDH-1 also plays a role in inorganic carbon-concentration. This Gloeobacter violaceus (strain ATCC 29082 / PCC 7421) protein is NAD(P)H-quinone oxidoreductase subunit O.